Reading from the N-terminus, the 244-residue chain is MAASARPVGVGGERATSFAMACSLLSRYVRQNGAAAAELGLGIRGEGEAPRAAPATMSLLPGEAERKKETMELFPQSAGFGQQDAITADSAADAREQEPEKRQLTIFYGGKVLVFNDFPADKAKGLMQLASKGSPVAPQNAAAPAPAAVTDNTKAPMAVPAPVSSLPTAQADAQKPARANASDMPIARKASLHRFLEKRKDRLNAKTPYQASPSDATPVKKEPESQPWLGLGPNAVVKPIERGQ.

The region spanning 97–132 (QEPEKRQLTIFYGGKVLVFNDFPADKAKGLMQLASK) is the Tify domain. The segment at 174-244 (QKPARANASD…AVVKPIERGQ (71 aa)) is disordered. The Jas motif lies at 185–210 (PIARKASLHRFLEKRKDRLNAKTPYQ). Positions 187–194 (ARKASLHR) match the Nuclear localization signal motif. Basic and acidic residues predominate over residues 194–204 (RFLEKRKDRLN).

Belongs to the TIFY/JAZ family. As to quaternary structure, interacts with BHLH148. Interacts with COI1A and COI1B in a coronatine-dependent manner. Coronatine is an analog of jasmonoyl isoleucine (JA-Ile). Post-translationally, ubiquitinated. Targeted for degradation by the SCF(COI1) E3 ubiquitin ligase-proteasome pathway during jasmonate signaling.

The protein localises to the nucleus. Repressor of jasmonate responses. The chain is Protein TIFY 10b from Oryza sativa subsp. japonica (Rice).